A 156-amino-acid chain; its full sequence is RNA polymerase sigma factor SigS (156 aa).

A Polymerase core binding motif is present at residues 29 to 44 (EYYQLLLIKMWQLSQI). Residues 126-145 (QYEIADIMSLSTSTIKLIKA) constitute a DNA-binding region (H-T-H motif).

It belongs to the sigma-70 factor family.

Functionally, sigma factors are initiation factors that promote the attachment of RNA polymerase to specific initiation sites and are then released. Sigma-S contributes to the protection against external stress, thus playing a role in cellular fitness and survival. In Staphylococcus aureus (strain MRSA252), this protein is RNA polymerase sigma factor SigS (sigS).